A 228-amino-acid polypeptide reads, in one-letter code: MPTNCAAAGCATTYNKHINISFHRFPLDPKRRKEWVRLVRRKNFVPGKHTFLCSKHFEASCFDLTGQTRRLKMDAVPTIFDFCTHIKSMKLKSRNLLKKNNSCSPAGPSNLKSNISSQQVLLEHSYAFRNPMEAKKRIIKLEKEIASLRRKMKTCLQKERRATRRWIKATCLVKNLEANSVLPKGTSEHMLPTALSSLPLEDFKILEQDQQDKTLLSLNLKQTKSTFI.

The THAP-type zinc-finger motif lies at 1–80 (MPTNCAAAGC…LKMDAVPTIF (80 aa)). Positions 123–126 (EHSY) match the HCFC1-binding motif (HBM) motif.

The polypeptide is THAP domain-containing protein 2 (THAP2) (Homo sapiens (Human)).